The chain runs to 395 residues: Terminal nucleotidyltransferase 5B (395 aa).

The protein belongs to the TENT family.

Its subcellular location is the cytoplasm. The protein localises to the nucleus. It carries out the reaction RNA(n) + ATP = RNA(n)-3'-adenine ribonucleotide + diphosphate. Functionally, catalyzes the transfer of one adenosine molecule from an ATP to an mRNA poly(A) tail bearing a 3'-OH terminal group in an ATP hydrolysis-dependent manner and participates in cytoplasmic polyadenylation. May be involved in maintaining the translation efficiency of at least some genes through preventing degradation of their mRNAs. The polypeptide is Terminal nucleotidyltransferase 5B (Xenopus tropicalis (Western clawed frog)).